The primary structure comprises 456 residues: MPYIPHTPNDTKEMLAAIGAQDIQDLFDEIPASLQYAGFQNIPAGINEMEMLKEAQNQAQKNRNGICFIGAGCYEHHIPAAVWDIASRGEFLTAYTPYQAEASQGTLQLLYEYQTMICELTGMEVSNASMYDGATALAEAVLMAVRLNKHSKTNRVLIAGTVHPFYRETIETIVRNQHIEVITLPFDEQQGITDLGSLNQYTGEDITALVIAQPNFFGCLEQVDKMTSWAHHNKTISVACINPTSLALLKPPGSWGEHGVDIVCGEGQPLGSPMASGGPYFGFLSTRMAHVRQMPGRIIGRTVDKDGKTGFSLTLQAREQHIRRAKATSNICTNQGLLVTAATIYMSLLGPEGLSQVATQCHQNTHELITALTQIEGVEQAFKASFFHEALIKLNQPVQSVLQQLADAGIAGGYAPEQHYPQLANTLLVCATEVRTAEDIAKYAKTLKAIMSKRGA.

It belongs to the GcvP family. N-terminal subunit subfamily. The glycine cleavage system is composed of four proteins: P, T, L and H. In this organism, the P 'protein' is a heterodimer of two subunits.

It carries out the reaction N(6)-[(R)-lipoyl]-L-lysyl-[glycine-cleavage complex H protein] + glycine + H(+) = N(6)-[(R)-S(8)-aminomethyldihydrolipoyl]-L-lysyl-[glycine-cleavage complex H protein] + CO2. Functionally, the glycine cleavage system catalyzes the degradation of glycine. The P protein binds the alpha-amino group of glycine through its pyridoxal phosphate cofactor; CO(2) is released and the remaining methylamine moiety is then transferred to the lipoamide cofactor of the H protein. This Legionella pneumophila (strain Lens) protein is Probable glycine dehydrogenase (decarboxylating) subunit 1.